We begin with the raw amino-acid sequence, 183 residues long: Adenine phosphoribosyltransferase (183 aa).

This sequence belongs to the purine/pyrimidine phosphoribosyltransferase family. In terms of assembly, homodimer.

It localises to the cytoplasm. It carries out the reaction AMP + diphosphate = 5-phospho-alpha-D-ribose 1-diphosphate + adenine. It participates in purine metabolism; AMP biosynthesis via salvage pathway; AMP from adenine: step 1/1. In terms of biological role, catalyzes a salvage reaction resulting in the formation of AMP, that is energically less costly than de novo synthesis. The protein is Adenine phosphoribosyltransferase of Corynebacterium kroppenstedtii (strain DSM 44385 / JCM 11950 / CIP 105744 / CCUG 35717).